A 226-amino-acid chain; its full sequence is Late expression factor 7 (226 aa).

In terms of domain architecture, F-box spans 9-58; sequence RAKRIRLPLEIIDTILQYLDPILHAKVVGLTTRVKCRLLRDNNVEDYLKL.

In terms of assembly, interacts with host S-phase kinase-associated protein 1/SKP1.

It is found in the host nucleus. The protein operates within protein degradation; proteasomal ubiquitin-dependent pathway. In terms of biological role, F-box protein that manipulates the host DNA damage response (DRR) in order to promote viral multiplication. Acts as a substrate recognition component of SKP1/Cullin/F-box (SCF) complexes for targeted protein polyubiquitination. This chain is Late expression factor 7 (LEF-7), found in Lepidoptera (butterflies and moths).